The primary structure comprises 182 residues: Flightin (182 aa).

The segment covering 1 to 15 has biased composition (acidic residues); sequence MADEEDPWGFDDGGE. The segment at 1–76 is disordered; it reads MADEEDPWGF…PPPPEDDGYR (76 aa).

Post-translationally, several forms of flightin are thought to be produced through post-translational modifications, possibly by phosphorylation. In terms of tissue distribution, found only in indirect flight muscles (IFM).

Its function is as follows. Possibly involved in the regulation of flight muscles contraction, possibly by modulating actin-myosin interaction. This is Flightin (fln) from Drosophila melanogaster (Fruit fly).